The sequence spans 248 residues: Tryptophan synthase alpha chain (248 aa).

Catalysis depends on proton acceptor residues Glu-36 and Asp-47.

Belongs to the TrpA family. As to quaternary structure, tetramer of two alpha and two beta chains.

The enzyme catalyses (1S,2R)-1-C-(indol-3-yl)glycerol 3-phosphate + L-serine = D-glyceraldehyde 3-phosphate + L-tryptophan + H2O. It functions in the pathway amino-acid biosynthesis; L-tryptophan biosynthesis; L-tryptophan from chorismate: step 5/5. The alpha subunit is responsible for the aldol cleavage of indoleglycerol phosphate to indole and glyceraldehyde 3-phosphate. This is Tryptophan synthase alpha chain from Pyrococcus abyssi (strain GE5 / Orsay).